Reading from the N-terminus, the 50-residue chain is Large ribosomal subunit protein bL33 (50 aa).

This sequence belongs to the bacterial ribosomal protein bL33 family.

This Citrifermentans bemidjiense (strain ATCC BAA-1014 / DSM 16622 / JCM 12645 / Bem) (Geobacter bemidjiensis) protein is Large ribosomal subunit protein bL33.